A 305-amino-acid chain; its full sequence is Acetylglutamate kinase (305 aa).

Substrate contacts are provided by residues G78–G79, R100, and N202.

Belongs to the acetylglutamate kinase family. ArgB subfamily.

Its subcellular location is the cytoplasm. The catalysed reaction is N-acetyl-L-glutamate + ATP = N-acetyl-L-glutamyl 5-phosphate + ADP. Its pathway is amino-acid biosynthesis; L-arginine biosynthesis; N(2)-acetyl-L-ornithine from L-glutamate: step 2/4. Its function is as follows. Catalyzes the ATP-dependent phosphorylation of N-acetyl-L-glutamate. The chain is Acetylglutamate kinase from Polaromonas sp. (strain JS666 / ATCC BAA-500).